We begin with the raw amino-acid sequence, 152 residues long: Protein Smg homolog (152 aa).

Belongs to the Smg family.

The protein is Protein Smg homolog of Nitrosomonas europaea (strain ATCC 19718 / CIP 103999 / KCTC 2705 / NBRC 14298).